A 269-amino-acid chain; its full sequence is MGKITAIKKLKRLYRVDLSDLDEEKIYLCEDTIIHFFITIDKEVSETDLEEILAYDQFAQGKSLALYYISFKMRTGAEVRKYLLEHDINDTDQIEQVLSVLTENNLINDKSYAENFIEGKISMGSSGPYQIKQKLLTKGISNDVLSEALKEIYSEEKQIDVAYKLASKLSRTYGTRLTLKQLKDKIIQNLMNKGFSYSVSSIALDSLELEADEENEMDLLYSELDKVAKRYTKNYEGYERKQKITQALARKGFSYDDISSALRDYTFPE.

The protein belongs to the RecX family.

The protein resides in the cytoplasm. Its function is as follows. Modulates RecA activity. This chain is Regulatory protein RecX, found in Lactococcus lactis subsp. cremoris (strain SK11).